The chain runs to 131 residues: Protein anoxia up-regulated (131 aa).

Positions 1–24 (MVYESGFTTRRTYSSRPVTTSYAV) are enriched in polar residues. The tract at residues 1–121 (MVYESGFTTR…STTSGNLPGG (121 aa)) is disordered. 2 stretches are compositionally biased toward low complexity: residues 44–53 (SSDYSYTSKS) and 98–116 (TSTT…TTSG).

In terms of tissue distribution, concentrated in lamina neurons, first optic lobe neurons and cortical neurons of central brain.

In terms of biological role, plays an important role in the regulation of tissue responsiveness to oxygen deprivation. In Drosophila melanogaster (Fruit fly), this protein is Protein anoxia up-regulated.